The chain runs to 838 residues: Protein translocase subunit SecA 1 (838 aa).

Residues Gln-85, 103–107 (GEGKT), and Asp-493 contribute to the ATP site. Cys-823, Cys-825, Cys-834, and His-835 together coordinate Zn(2+).

The protein belongs to the SecA family. As to quaternary structure, monomer and homodimer. Part of the essential Sec protein translocation apparatus which comprises SecA, SecYEG and auxiliary proteins SecDF. Other proteins may also be involved. Zn(2+) serves as cofactor.

Its subcellular location is the cell membrane. It localises to the cytoplasm. It catalyses the reaction ATP + H2O + cellular proteinSide 1 = ADP + phosphate + cellular proteinSide 2.. Part of the Sec protein translocase complex. Interacts with the SecYEG preprotein conducting channel. Has a central role in coupling the hydrolysis of ATP to the transfer of proteins into and across the cell membrane, serving as an ATP-driven molecular motor driving the stepwise translocation of polypeptide chains across the membrane. This chain is Protein translocase subunit SecA 1, found in Streptococcus gordonii.